The chain runs to 199 residues: Fe/S biogenesis protein NfuA (199 aa).

[4Fe-4S] cluster-binding residues include C151 and C154.

This sequence belongs to the NfuA family. As to quaternary structure, homodimer. It depends on [4Fe-4S] cluster as a cofactor.

Functionally, involved in iron-sulfur cluster biogenesis. Binds a 4Fe-4S cluster, can transfer this cluster to apoproteins, and thereby intervenes in the maturation of Fe/S proteins. Could also act as a scaffold/chaperone for damaged Fe/S proteins. The polypeptide is Fe/S biogenesis protein NfuA (Xylella fastidiosa (strain M12)).